Reading from the N-terminus, the 154-residue chain is MKTFKGVASAKDMRVAIVGACFNGPIADALVSGAQQTFLDLGGAEDMLTVVRVPGSFEIPCTLKKLLTSGVKYDAIVACGVLIKGETTHYDHIADQVSARISELSLEFNLPITFSVITAPCIDSAWQRAGIKGSNLGISGMKTALEMADLFKKL.

5-amino-6-(D-ribitylamino)uracil is bound by residues F22, 56-58 (SFE), and 81-83 (VLI). A (2S)-2-hydroxy-3-oxobutyl phosphate-binding site is contributed by 86-87 (ET). H89 acts as the Proton donor in catalysis. F114 contacts 5-amino-6-(D-ribitylamino)uracil. Position 128 (R128) interacts with (2S)-2-hydroxy-3-oxobutyl phosphate.

The protein belongs to the DMRL synthase family.

It catalyses the reaction (2S)-2-hydroxy-3-oxobutyl phosphate + 5-amino-6-(D-ribitylamino)uracil = 6,7-dimethyl-8-(1-D-ribityl)lumazine + phosphate + 2 H2O + H(+). It participates in cofactor biosynthesis; riboflavin biosynthesis; riboflavin from 2-hydroxy-3-oxobutyl phosphate and 5-amino-6-(D-ribitylamino)uracil: step 1/2. Catalyzes the formation of 6,7-dimethyl-8-ribityllumazine by condensation of 5-amino-6-(D-ribitylamino)uracil with 3,4-dihydroxy-2-butanone 4-phosphate. This is the penultimate step in the biosynthesis of riboflavin. The sequence is that of 6,7-dimethyl-8-ribityllumazine synthase from Chlamydia caviae (strain ATCC VR-813 / DSM 19441 / 03DC25 / GPIC) (Chlamydophila caviae).